We begin with the raw amino-acid sequence, 128 residues long: Glycine cleavage system H protein (128 aa).

A Lipoyl-binding domain is found at 25–107; sequence TFKVGITDHA…YEAGWLFTVR (83 aa). K66 is modified (N6-lipoyllysine).

It belongs to the GcvH family. In terms of assembly, the glycine cleavage system is composed of four proteins: P, T, L and H. The cofactor is (R)-lipoate.

The glycine cleavage system catalyzes the degradation of glycine. The H protein shuttles the methylamine group of glycine from the P protein to the T protein. The polypeptide is Glycine cleavage system H protein (Kocuria rhizophila (strain ATCC 9341 / DSM 348 / NBRC 103217 / DC2201)).